Consider the following 461-residue polypeptide: UDP-N-acetylmuramoylalanine--D-glutamate ligase (461 aa).

123–129 contacts ATP; it reads GTNGKTT.

The protein belongs to the MurCDEF family.

It is found in the cytoplasm. The catalysed reaction is UDP-N-acetyl-alpha-D-muramoyl-L-alanine + D-glutamate + ATP = UDP-N-acetyl-alpha-D-muramoyl-L-alanyl-D-glutamate + ADP + phosphate + H(+). It participates in cell wall biogenesis; peptidoglycan biosynthesis. In terms of biological role, cell wall formation. Catalyzes the addition of glutamate to the nucleotide precursor UDP-N-acetylmuramoyl-L-alanine (UMA). This Natranaerobius thermophilus (strain ATCC BAA-1301 / DSM 18059 / JW/NM-WN-LF) protein is UDP-N-acetylmuramoylalanine--D-glutamate ligase.